We begin with the raw amino-acid sequence, 131 residues long: UPF0212 protein TK1194 (131 aa).

It belongs to the UPF0212 family.

The polypeptide is UPF0212 protein TK1194 (Thermococcus kodakarensis (strain ATCC BAA-918 / JCM 12380 / KOD1) (Pyrococcus kodakaraensis (strain KOD1))).